Consider the following 203-residue polypeptide: Urease accessory protein UreG (203 aa).

10-17 (GPVGAGKT) provides a ligand contact to GTP.

This sequence belongs to the SIMIBI class G3E GTPase family. UreG subfamily. Homodimer. UreD, UreF and UreG form a complex that acts as a GTP-hydrolysis-dependent molecular chaperone, activating the urease apoprotein by helping to assemble the nickel containing metallocenter of UreC. The UreE protein probably delivers the nickel.

It is found in the cytoplasm. Functionally, facilitates the functional incorporation of the urease nickel metallocenter. This process requires GTP hydrolysis, probably effectuated by UreG. The chain is Urease accessory protein UreG from Micrococcus luteus (strain ATCC 4698 / DSM 20030 / JCM 1464 / CCM 169 / CCUG 5858 / IAM 1056 / NBRC 3333 / NCIMB 9278 / NCTC 2665 / VKM Ac-2230) (Micrococcus lysodeikticus).